Here is a 231-residue protein sequence, read N- to C-terminus: NADH-ubiquinone oxidoreductase chain 4 (231 aa).

6 consecutive transmembrane segments (helical) span residues 1–21 (PIAG…YGII), 34–54 (MFLP…LTCL), 63–85 (IAYS…TPWG), 89–111 (AMAL…NTTY), 128–148 (ILPM…AVPP), and 156–176 (LLIM…LGLS).

It belongs to the complex I subunit 4 family.

It localises to the mitochondrion membrane. It carries out the reaction a ubiquinone + NADH + 5 H(+)(in) = a ubiquinol + NAD(+) + 4 H(+)(out). In terms of biological role, core subunit of the mitochondrial membrane respiratory chain NADH dehydrogenase (Complex I) that is believed to belong to the minimal assembly required for catalysis. Complex I functions in the transfer of electrons from NADH to the respiratory chain. The immediate electron acceptor for the enzyme is believed to be ubiquinone. This Agkistrodon contortrix contortrix (Southern copperhead) protein is NADH-ubiquinone oxidoreductase chain 4 (MT-ND4).